Here is a 199-residue protein sequence, read N- to C-terminus: NAD(P)H dehydrogenase (quinone) (199 aa).

The Flavodoxin-like domain occupies 4–190 (VLVLYYSAYG…AGARYQGRQI (187 aa)). Residues 10 to 15 (SAYGHI) and 78 to 80 (TRF) contribute to the FMN site. Position 12 (Tyr-12) interacts with NAD(+). Trp-98 contacts substrate. Residues 113 to 119 (SSATQHG) and His-134 contribute to the FMN site.

The protein belongs to the WrbA family. FMN is required as a cofactor.

The enzyme catalyses a quinone + NADH + H(+) = a quinol + NAD(+). The catalysed reaction is a quinone + NADPH + H(+) = a quinol + NADP(+). The chain is NAD(P)H dehydrogenase (quinone) from Bradyrhizobium diazoefficiens (strain JCM 10833 / BCRC 13528 / IAM 13628 / NBRC 14792 / USDA 110).